A 510-amino-acid polypeptide reads, in one-letter code: GMP synthase [glutamine-hydrolyzing] (510 aa).

Residues T5–D195 enclose the Glutamine amidotransferase type-1 domain. The active-site Nucleophile is C82. Residues H169 and E171 contribute to the active site. A GMPS ATP-PPase domain is found at W196 to R385. S223 to S229 is a binding site for ATP.

In terms of assembly, homodimer.

The enzyme catalyses XMP + L-glutamine + ATP + H2O = GMP + L-glutamate + AMP + diphosphate + 2 H(+). The protein operates within purine metabolism; GMP biosynthesis; GMP from XMP (L-Gln route): step 1/1. Functionally, catalyzes the synthesis of GMP from XMP. This is GMP synthase [glutamine-hydrolyzing] from Syntrophomonas wolfei subsp. wolfei (strain DSM 2245B / Goettingen).